A 258-amino-acid chain; its full sequence is Probable parvulin-type peptidyl-prolyl cis-trans isomerase (258 aa).

The signal sequence occupies residues 1–19 (MKRIAMLAAACVIAVPAFA). Residues 127 to 219 (KMEYKVRHIL…FGWHVIQVDD (93 aa)) enclose the PpiC domain.

The protein belongs to the PpiC/parvulin rotamase family.

The enzyme catalyses [protein]-peptidylproline (omega=180) = [protein]-peptidylproline (omega=0). The sequence is that of Probable parvulin-type peptidyl-prolyl cis-trans isomerase from Bordetella parapertussis (strain 12822 / ATCC BAA-587 / NCTC 13253).